Here is a 341-residue protein sequence, read N- to C-terminus: HTH-type transcriptional repressor PurR (341 aa).

One can recognise an HTH lacI-type domain in the interval 2–56 (ATIKDVAKRANVSTTTVSHVINKTRFVAEETRNAVWAAIKELHYSPSAVARSLKV). The H-T-H motif DNA-binding region spans 4 to 23 (IKDVAKRANVSTTTVSHVIN). Residues 48 to 56 (SAVARSLKV) mediate DNA binding. Hypoxanthine contacts are provided by Tyr-73, Arg-190, Thr-192, Phe-221, and Asp-275.

Homodimer.

It functions in the pathway purine metabolism; purine nucleotide biosynthesis [regulation]. Its function is as follows. Is the main repressor of the genes involved in the de novo synthesis of purine nucleotides, regulating purB, purC, purEK, purF, purHD, purL, purMN and guaBA expression. PurR is allosterically activated to bind its cognate DNA by binding the purine corepressors, hypoxanthine or guanine, thereby effecting transcription repression. This chain is HTH-type transcriptional repressor PurR, found in Salmonella typhimurium (strain LT2 / SGSC1412 / ATCC 700720).